A 156-amino-acid chain; its full sequence is Ribosomal RNA large subunit methyltransferase H (156 aa).

S-adenosyl-L-methionine-binding positions include Leu-73, Gly-104, and 123–128 (LSALTL).

This sequence belongs to the RNA methyltransferase RlmH family. As to quaternary structure, homodimer.

It localises to the cytoplasm. The catalysed reaction is pseudouridine(1915) in 23S rRNA + S-adenosyl-L-methionine = N(3)-methylpseudouridine(1915) in 23S rRNA + S-adenosyl-L-homocysteine + H(+). Its function is as follows. Specifically methylates the pseudouridine at position 1915 (m3Psi1915) in 23S rRNA. The polypeptide is Ribosomal RNA large subunit methyltransferase H (Shewanella sp. (strain MR-7)).